The following is a 278-amino-acid chain: MNSGPKVSVIMGIYNCERTLAESIESILSQSYKNWELILCDDASTDGTLRIAKQYAAHYSDRIKLIQNKTNKRLAASLNHCLSHATGDYIARQDGDDLSFPRRLEKQVAFLEKHRHYQVVGTGMLVFDEFGVRGARILPSVPEPGIMAKGTPFCHGTIMMRASAYRTLKGYRSVRRTRRMEDIDLWLRFFEEGFRGYNLQEALYKVREDSDAFKRRSFTYSIDNAILVYQACRRLKLPLSDYIYIAKPLIRAFMPAAVMNRYHKKRVMNQKEGLVKHE.

Belongs to the glycosyltransferase 2 family.

Functionally, may be involved in the production of the exopolysaccharide (EPS) component of the extracellular matrix during biofilm formation. EPS is responsible for the adhesion of chains of cells into bundles. Required for biofilm maintenance. In Bacillus subtilis (strain 168), this protein is Putative glycosyltransferase EpsE (epsE).